We begin with the raw amino-acid sequence, 37 residues long: U4-theraphotoxin-Hhn1v (37 aa).

3 disulfide bridges follow: Cys3/Cys17, Cys7/Cys28, and Cys22/Cys33.

The protein belongs to the neurotoxin 12 (Hwtx-2) family. 02 (Hwtx-2) subfamily. As to expression, expressed by the venom gland.

The protein localises to the secreted. Its function is as follows. Postsynaptic neurotoxin. The protein is U4-theraphotoxin-Hhn1v of Cyriopagopus hainanus (Chinese bird spider).